We begin with the raw amino-acid sequence, 392 residues long: Tryptophan synthase beta chain (392 aa).

An N6-(pyridoxal phosphate)lysine modification is found at Lys86.

It belongs to the TrpB family. Tetramer of two alpha and two beta chains. Pyridoxal 5'-phosphate is required as a cofactor.

It carries out the reaction (1S,2R)-1-C-(indol-3-yl)glycerol 3-phosphate + L-serine = D-glyceraldehyde 3-phosphate + L-tryptophan + H2O. It participates in amino-acid biosynthesis; L-tryptophan biosynthesis; L-tryptophan from chorismate: step 5/5. In terms of biological role, the beta subunit is responsible for the synthesis of L-tryptophan from indole and L-serine. The polypeptide is Tryptophan synthase beta chain (trpB) (Buchnera aphidicola subsp. Melaphis rhois).